Here is a 275-residue protein sequence, read N- to C-terminus: MLLAIDAGNTNIVFALVDGREIRARWRIATEGRRTADEYAVWLVQLMAIGGFTREEIDSVVICTVVPRTLHNLEVLSAKYFGVKALIAGTPPLDWGIDIDVISPETVGADRLVNALAAHHLHSGHKIAIDFGTATTFDWVDEKGAYRGGIIAPGINLSLDALVGKAARLPRIAIEIPKTDSVIGRSTEESMHSGIYWGYIAMIEGLTERMKQEIGQPVTVIATGGLASLFAVHTSVFDVIEPDLTIRGMALLYEQKAPTKFTAHSGGFAADFSPL.

An ATP-binding site is contributed by 6 to 13 (DAGNTNIV). 108–111 (GADR) contacts substrate. The active-site Proton acceptor is the Asp-110. Position 130 (Asp-130) interacts with K(+). Thr-133 serves as a coordination point for ATP. Position 187 (Thr-187) interacts with substrate.

The protein belongs to the type III pantothenate kinase family. As to quaternary structure, homodimer. Requires NH4(+) as cofactor. The cofactor is K(+).

It localises to the cytoplasm. It catalyses the reaction (R)-pantothenate + ATP = (R)-4'-phosphopantothenate + ADP + H(+). The protein operates within cofactor biosynthesis; coenzyme A biosynthesis; CoA from (R)-pantothenate: step 1/5. Catalyzes the phosphorylation of pantothenate (Pan), the first step in CoA biosynthesis. This chain is Type III pantothenate kinase, found in Zymomonas mobilis subsp. mobilis (strain ATCC 31821 / ZM4 / CP4).